Here is a 328-residue protein sequence, read N- to C-terminus: MSLTPVTVAVTGAAGQIGYSLLFRIAHGDMLGRQRPVRLRLLEIPSALPALEGTVMELQDCAFPLLADVEIGSDPREVFDGAQLALLVGARPRTKGMERGDLLEANGAIFTEQGRALNDVADHDVRVVVTGNPANTNALIAQRNAPDIPASRFSALTRLDHNRAVAMLAAQTGASVDDVKHLSVWGNHSATQYPDLDHARVAGRPALDLVSREWVQDTFIPTVAKRGAAILEARGASSAASAANATIDHARDLMLGNHRGDWTSMSVVSDGSYGVPEGLVSSFPVTTSGGDWSIVQGLDISEFSRARIDASVAELESERAAVQELGLI.

12-18 (GAAGQIG) is a binding site for NAD(+). Residues arginine 93 and arginine 99 each coordinate substrate. NAD(+)-binding positions include asparagine 106, glutamine 113, and 130–132 (TGN). Residues asparagine 132 and arginine 163 each contribute to the substrate site. Residue histidine 188 is the Proton acceptor of the active site.

It belongs to the LDH/MDH superfamily. MDH type 2 family.

It catalyses the reaction (S)-malate + NAD(+) = oxaloacetate + NADH + H(+). Its function is as follows. Catalyzes the reversible oxidation of malate to oxaloacetate. This chain is Malate dehydrogenase, found in Kocuria rhizophila (strain ATCC 9341 / DSM 348 / NBRC 103217 / DC2201).